A 312-amino-acid polypeptide reads, in one-letter code: Olfactory receptor 1D2 (312 aa).

At 1–25 the chain is on the extracellular side; it reads MDGGNQSEGSEFLLLGMSESPEQQQ. An N-linked (GlcNAc...) asparagine glycan is attached at N5. The chain crosses the membrane as a helical span at residues 26-49; sequence ILFWMFLSMYLVTVVGNVLIILAI. Residues 50-57 are Cytoplasmic-facing; that stretch reads NSDSHLHT. Residues 58–79 traverse the membrane as a helical segment; it reads PMYFFLANLSFTDLFFVTNTIP. The Extracellular segment spans residues 80 to 100; it reads KMLVNLQSQNKAISYAGCLTQ. A disulfide bridge connects residues C97 and C189. The helical transmembrane segment at 101–120 threads the bilayer; the sequence is LYFLVSLVALDNLILAVMAY. At 121–139 the chain is on the cytoplasmic side; sequence DRYVAICCPLHYTTAMSPK. Residues 140–158 traverse the membrane as a helical segment; that stretch reads LCILLLSLCWVLSVLYGLI. At 159–196 the chain is on the extracellular side; sequence HTILMTRVTFCGSRKIHYIFCEMYVLLRMACSNIQINH. N195 carries N-linked (GlcNAc...) asparagine glycosylation. The helical transmembrane segment at 197–219 threads the bilayer; sequence TVLIATGCFIFLIPFGFVIISYV. At 220–236 the chain is on the cytoplasmic side; sequence LIIRAILRIPSVSKKYK. Residues 237–259 form a helical membrane-spanning segment; the sequence is AFSTCASHLGAVSLFYGTLCMVY. The Extracellular portion of the chain corresponds to 260-271; the sequence is LKPLHTFSVKDS. Residues 272-291 form a helical membrane-spanning segment; that stretch reads VATVMYAVVTPMMNPFIYSL. The Cytoplasmic portion of the chain corresponds to 292–312; the sequence is RNKDMHGALGRLLDTHFKRLT.

This sequence belongs to the G-protein coupled receptor 1 family.

The protein resides in the cell membrane. Its function is as follows. Odorant receptor. This Gorilla gorilla gorilla (Western lowland gorilla) protein is Olfactory receptor 1D2 (OR1D2).